The primary structure comprises 280 residues: Shikimate dehydrogenase (NADP(+)) (280 aa).

Residues 15–17 (SLS) and Thr-62 each bind shikimate. Residue Lys-66 is the Proton acceptor of the active site. Residues Asn-88 and Asp-104 each coordinate shikimate. NADP(+) is bound by residues 128–132 (GAGGA), 151–156 (NRTEGR), and Ile-222. Position 224 (Tyr-224) interacts with shikimate. Gly-245 is an NADP(+) binding site.

The protein belongs to the shikimate dehydrogenase family. Homodimer.

The enzyme catalyses shikimate + NADP(+) = 3-dehydroshikimate + NADPH + H(+). It functions in the pathway metabolic intermediate biosynthesis; chorismate biosynthesis; chorismate from D-erythrose 4-phosphate and phosphoenolpyruvate: step 4/7. Functionally, involved in the biosynthesis of the chorismate, which leads to the biosynthesis of aromatic amino acids. Catalyzes the reversible NADPH linked reduction of 3-dehydroshikimate (DHSA) to yield shikimate (SA). The sequence is that of Shikimate dehydrogenase (NADP(+)) from Methanosarcina barkeri (strain Fusaro / DSM 804).